Here is a 630-residue protein sequence, read N- to C-terminus: Probable potassium transport system protein Kup (630 aa).

Helical transmembrane passes span 17–37, 51–71, 105–125, 144–164, 175–195, 218–238, 255–275, 283–303, 344–364, 374–394, 402–422, and 428–448; these read LAIA…LYSL, PSAI…VVGI, ITGL…GDAV, PQLS…LFWI, LFGP…IYHI, VLLA…AEAL, YVLV…LLLL, PFFL…STVA, IYVP…VIGF, YGIA…VVMV, LLVA…FGAN, and QGGW…MTWY.

This sequence belongs to the HAK/KUP transporter (TC 2.A.72) family.

Its subcellular location is the cell inner membrane. It catalyses the reaction K(+)(in) + H(+)(in) = K(+)(out) + H(+)(out). Functionally, transport of potassium into the cell. Likely operates as a K(+):H(+) symporter. The sequence is that of Probable potassium transport system protein Kup from Burkholderia pseudomallei (strain K96243).